The chain runs to 375 residues: Putative actin-26 (375 aa).

This sequence belongs to the actin family.

The protein resides in the cytoplasm. The protein localises to the cytoskeleton. The catalysed reaction is ATP + H2O = ADP + phosphate + H(+). In terms of biological role, actins are highly conserved proteins that are involved in various types of cell motility and are ubiquitously expressed in all eukaryotic cells. Multiple isoforms are involved in various cellular functions such as cytoskeleton structure, cell mobility, chromosome movement and muscle contraction. The chain is Putative actin-26 (act26) from Dictyostelium discoideum (Social amoeba).